Here is a 723-residue protein sequence, read N- to C-terminus: Enolase-phosphatase E1 (723 aa).

Residues 126-127 (SS) and Lys160 contribute to the substrate site. The interval 239-723 (GAGAKRKIDE…TPTPPIEAES (485 aa)) is disordered. Basic and acidic residues-rich tracts occupy residues 262–284 (VKKD…DEPA) and 293–308 (AAKE…KMEV). Low complexity predominate over residues 311 to 320 (AAAAAAPPAD). Composition is skewed to basic and acidic residues over residues 322-406 (AEEK…VVEE), 419-443 (AEEK…KPAE), 468-479 (EPAKEKPAEAEA), 487-496 (TKAEVVEKPA), 511-565 (SADK…KGEE), and 577-593 (VEAK…KSDA). Composition is skewed to low complexity over residues 596-606 (VSTTTTTTSTE) and 636-647 (NGEAEPAAEAVV). Residues 653–666 (GKHEEKGDSDKEND) are compositionally biased toward basic and acidic residues.

Belongs to the HAD-like hydrolase superfamily. MasA/MtnC family. As to quaternary structure, monomer.

The protein localises to the cytoplasm. The protein resides in the nucleus. It carries out the reaction 5-methylsulfanyl-2,3-dioxopentyl phosphate + H2O = 1,2-dihydroxy-5-(methylsulfanyl)pent-1-en-3-one + phosphate. The protein operates within amino-acid biosynthesis; L-methionine biosynthesis via salvage pathway; L-methionine from S-methyl-5-thio-alpha-D-ribose 1-phosphate: step 3/6. Its pathway is amino-acid biosynthesis; L-methionine biosynthesis via salvage pathway; L-methionine from S-methyl-5-thio-alpha-D-ribose 1-phosphate: step 4/6. Functionally, bifunctional enzyme that catalyzes the enolization of 2,3-diketo-5-methylthiopentyl-1-phosphate (DK-MTP-1-P) into the intermediate 2-hydroxy-3-keto-5-methylthiopentenyl-1-phosphate (HK-MTPenyl-1-P), which is then dephosphorylated to form the acireductone 1,2-dihydroxy-3-keto-5-methylthiopentene (DHK-MTPene). This chain is Enolase-phosphatase E1, found in Culex quinquefasciatus (Southern house mosquito).